The following is a 103-amino-acid chain: Large ribosomal subunit protein bL21 (103 aa).

The protein belongs to the bacterial ribosomal protein bL21 family. Part of the 50S ribosomal subunit. Contacts protein L20.

In terms of biological role, this protein binds to 23S rRNA in the presence of protein L20. The chain is Large ribosomal subunit protein bL21 from Vibrio cholerae serotype O1 (strain ATCC 39541 / Classical Ogawa 395 / O395).